We begin with the raw amino-acid sequence, 625 residues long: 1-deoxy-D-xylulose-5-phosphate synthase 1 (625 aa).

Thiamine diphosphate-binding positions include histidine 74 and 115-117 (GHT). Aspartate 146 is a Mg(2+) binding site. Thiamine diphosphate contacts are provided by residues 147–148 (GS), asparagine 175, tyrosine 286, and glutamate 368. Mg(2+) is bound at residue asparagine 175.

This sequence belongs to the transketolase family. DXPS subfamily. In terms of assembly, homodimer. Requires Mg(2+) as cofactor. The cofactor is thiamine diphosphate.

It catalyses the reaction D-glyceraldehyde 3-phosphate + pyruvate + H(+) = 1-deoxy-D-xylulose 5-phosphate + CO2. The protein operates within metabolic intermediate biosynthesis; 1-deoxy-D-xylulose 5-phosphate biosynthesis; 1-deoxy-D-xylulose 5-phosphate from D-glyceraldehyde 3-phosphate and pyruvate: step 1/1. Its function is as follows. Catalyzes the acyloin condensation reaction between C atoms 2 and 3 of pyruvate and glyceraldehyde 3-phosphate to yield 1-deoxy-D-xylulose-5-phosphate (DXP). The chain is 1-deoxy-D-xylulose-5-phosphate synthase 1 from Geobacter metallireducens (strain ATCC 53774 / DSM 7210 / GS-15).